Reading from the N-terminus, the 462-residue chain is Cytochrome P450 20A1 (462 aa).

The chain crosses the membrane as a helical span at residues 4–24; that stretch reads FAIFAVTFLLALVGAVLYLYP. C409 contributes to the heme binding site.

This sequence belongs to the cytochrome P450 family. It depends on heme as a cofactor.

The protein resides in the membrane. The sequence is that of Cytochrome P450 20A1 (CYP20A1) from Bos taurus (Bovine).